The following is a 284-amino-acid chain: Bifunctional protein FolD (284 aa).

Residues 165–167 (GRS) and Ser190 contribute to the NADP(+) site.

Belongs to the tetrahydrofolate dehydrogenase/cyclohydrolase family. In terms of assembly, homodimer.

The catalysed reaction is (6R)-5,10-methylene-5,6,7,8-tetrahydrofolate + NADP(+) = (6R)-5,10-methenyltetrahydrofolate + NADPH. It carries out the reaction (6R)-5,10-methenyltetrahydrofolate + H2O = (6R)-10-formyltetrahydrofolate + H(+). It functions in the pathway one-carbon metabolism; tetrahydrofolate interconversion. Functionally, catalyzes the oxidation of 5,10-methylenetetrahydrofolate to 5,10-methenyltetrahydrofolate and then the hydrolysis of 5,10-methenyltetrahydrofolate to 10-formyltetrahydrofolate. This chain is Bifunctional protein FolD, found in Streptococcus agalactiae serotype Ia (strain ATCC 27591 / A909 / CDC SS700).